Here is a 343-residue protein sequence, read N- to C-terminus: Aspartate carbamoyltransferase catalytic subunit (343 aa).

Polar residues predominate over residues 1–14 (MTTDTTGRTGNPAA). The interval 1–20 (MTTDTTGRTGNPAATASPDR) is disordered. Arg-91 and Thr-92 together coordinate carbamoyl phosphate. L-aspartate is bound at residue Lys-119. Carbamoyl phosphate contacts are provided by Arg-141, His-171, and Gln-174. Residues Arg-204 and Arg-259 each coordinate L-aspartate. Carbamoyl phosphate contacts are provided by Gly-300 and Pro-301.

This sequence belongs to the aspartate/ornithine carbamoyltransferase superfamily. ATCase family. In terms of assembly, heterododecamer (2C3:3R2) of six catalytic PyrB chains organized as two trimers (C3), and six regulatory PyrI chains organized as three dimers (R2).

The enzyme catalyses carbamoyl phosphate + L-aspartate = N-carbamoyl-L-aspartate + phosphate + H(+). Its pathway is pyrimidine metabolism; UMP biosynthesis via de novo pathway; (S)-dihydroorotate from bicarbonate: step 2/3. Functionally, catalyzes the condensation of carbamoyl phosphate and aspartate to form carbamoyl aspartate and inorganic phosphate, the committed step in the de novo pyrimidine nucleotide biosynthesis pathway. In Burkholderia lata (strain ATCC 17760 / DSM 23089 / LMG 22485 / NCIMB 9086 / R18194 / 383), this protein is Aspartate carbamoyltransferase catalytic subunit.